The following is a 303-amino-acid chain: Holdfast attachment protein D (303 aa).

Residues 266–281 (SARSTMSGPKSCSTTF) are compositionally biased toward polar residues. The segment at 266–303 (SARSTMSGPKSCSTTFRPIRAAASRRPPASAGTRAMTR) is disordered. A compositionally biased stretch (low complexity) spans 282–303 (RPIRAAASRRPPASAGTRAMTR).

It is found in the cell outer membrane. Its function is as follows. Involved in attachment of the holdfast to the cell. The holdfast is a structure that allows the bacteria to firmly adhere to surfaces. The chain is Holdfast attachment protein D (hfaD) from Caulobacter vibrioides (strain ATCC 19089 / CIP 103742 / CB 15) (Caulobacter crescentus).